We begin with the raw amino-acid sequence, 202 residues long: Coiled-coil domain-containing protein 85B (202 aa).

M1 is modified (N-acetylmethionine). Coiled coils occupy residues 43–90 and 118–147; these read GRLM…ERQR and QKLA…LGEE. Residues 148–202 are disordered; the sequence is WGPRGGPSGAGGSGAGPAPELALPPCGPRDLGDGSSSTGSVGSPDQLPLACSPDD. A compositionally biased stretch (gly residues) spans 150–162; sequence PRGGPSGAGGSGA. The span at 180–190 shows a compositional bias: low complexity; the sequence is DGSSSTGSVGS.

It belongs to the CCDC85 family. Interacts with CEBPB. Interacts with EURL. May interact with CEBPD. Interacts with MCRS1. Interacts with TCF7L2; competes with CTNNB1. Interacts with ANKRD26. Interacts with the beta-catenin family proteins ARVCF, CTNND1, CTNND2 and PKP4. In terms of assembly, (Microbial infection) Interacts with the viral phosphoprotein hepatitis delta antigen (HDAG); this interaction affects hepatitis delta virus (HDV) genomic replication in intact cells. In terms of tissue distribution, widely expressed including liver.

Its subcellular location is the nucleus. It is found in the cytoplasm. The protein resides in the cytoskeleton. It localises to the microtubule organizing center. The protein localises to the centrosome. Its subcellular location is the cell junction. It is found in the adherens junction. In terms of biological role, functions as a transcriptional repressor. May inhibit the activity of CTNNB1 in a TP53-dependent manner and thus regulate cell growth. May function in adipocyte differentiation, negatively regulating mitotic clonal expansion. Plays a role in cell-cell adhesion and epithelium development through its interaction with proteins of the beta-catenin family. Functionally, (Microbial infection) Plays a role in hepatitis delta virus (HDV) genomic replication. In Homo sapiens (Human), this protein is Coiled-coil domain-containing protein 85B (CCDC85B).